Consider the following 119-residue polypeptide: Beta-2-microglobulin (119 aa).

The signal sequence occupies residues 1 to 20 (MARFVVVALLVLLSVSDLEA). The Ig-like C1-type domain maps to 25 to 114 (PKIQVYSRYP…VTFLTPKTVK (90 aa)). A disulfide bridge links C45 with C100.

It belongs to the beta-2-microglobulin family. As to quaternary structure, heterodimer of an alpha chain and a beta chain. Beta-2-microglobulin is the beta-chain of major histocompatibility complex class I molecules.

It is found in the secreted. Component of the class I major histocompatibility complex (MHC). Involved in the presentation of peptide antigens to the immune system. The protein is Beta-2-microglobulin (B2M) of Leontocebus fuscicollis (Brown-mantled tamarin).